The chain runs to 255 residues: uncharacterized protein (255 aa).

Positions 4–59 constitute an HTH deoR-type domain; that stretch reads RNERLNLIRKRVDQYGQVAVKDLAIFLQVTPETVRKDLETLENDKLITRTHGGAIQ. The H-T-H motif DNA-binding region spans 21-40; sequence VAVKDLAIFLQVTPETVRKD.

This is an uncharacterized protein from Staphylococcus epidermidis (strain ATCC 12228 / FDA PCI 1200).